We begin with the raw amino-acid sequence, 225 residues long: Uridylate kinase (225 aa).

9-10 (GS) contributes to the ATP binding site. Position 44 (G44) interacts with UMP. Residues G45 and R49 each coordinate ATP. UMP is bound by residues D66 and 114-120 (THPGHTT). Residues T140, N141, Y146, and D149 each contribute to the ATP site.

It belongs to the UMP kinase family. As to quaternary structure, homohexamer.

Its subcellular location is the cytoplasm. The enzyme catalyses UMP + ATP = UDP + ADP. Its pathway is pyrimidine metabolism; CTP biosynthesis via de novo pathway; UDP from UMP (UMPK route): step 1/1. Inhibited by UTP. Catalyzes the reversible phosphorylation of UMP to UDP. This chain is Uridylate kinase, found in Thermococcus kodakarensis (strain ATCC BAA-918 / JCM 12380 / KOD1) (Pyrococcus kodakaraensis (strain KOD1)).